The sequence spans 340 residues: tRNA N6-adenosine threonylcarbamoyltransferase (340 aa).

Positions 115 and 119 each coordinate Fe cation. Substrate contacts are provided by residues Val-138–Gly-142, Asp-171, Gly-184, Asp-188, and Asn-278. Fe cation is bound at residue Asp-306.

It belongs to the KAE1 / TsaD family. The cofactor is Fe(2+).

The protein localises to the cytoplasm. It carries out the reaction L-threonylcarbamoyladenylate + adenosine(37) in tRNA = N(6)-L-threonylcarbamoyladenosine(37) in tRNA + AMP + H(+). Functionally, required for the formation of a threonylcarbamoyl group on adenosine at position 37 (t(6)A37) in tRNAs that read codons beginning with adenine. Is involved in the transfer of the threonylcarbamoyl moiety of threonylcarbamoyl-AMP (TC-AMP) to the N6 group of A37, together with TsaE and TsaB. TsaD likely plays a direct catalytic role in this reaction. The protein is tRNA N6-adenosine threonylcarbamoyltransferase of Clostridium botulinum (strain 657 / Type Ba4).